Here is a 321-residue protein sequence, read N- to C-terminus: Lipoyl synthase (321 aa).

[4Fe-4S] cluster contacts are provided by C68, C73, C79, C94, C98, C101, and S308. The Radical SAM core domain occupies 80-297 (FNHGTATFMI…REFAESIGFT (218 aa)).

This sequence belongs to the radical SAM superfamily. Lipoyl synthase family. Requires [4Fe-4S] cluster as cofactor.

The protein localises to the cytoplasm. It carries out the reaction [[Fe-S] cluster scaffold protein carrying a second [4Fe-4S](2+) cluster] + N(6)-octanoyl-L-lysyl-[protein] + 2 oxidized [2Fe-2S]-[ferredoxin] + 2 S-adenosyl-L-methionine + 4 H(+) = [[Fe-S] cluster scaffold protein] + N(6)-[(R)-dihydrolipoyl]-L-lysyl-[protein] + 4 Fe(3+) + 2 hydrogen sulfide + 2 5'-deoxyadenosine + 2 L-methionine + 2 reduced [2Fe-2S]-[ferredoxin]. The protein operates within protein modification; protein lipoylation via endogenous pathway; protein N(6)-(lipoyl)lysine from octanoyl-[acyl-carrier-protein]: step 2/2. Its function is as follows. Catalyzes the radical-mediated insertion of two sulfur atoms into the C-6 and C-8 positions of the octanoyl moiety bound to the lipoyl domains of lipoate-dependent enzymes, thereby converting the octanoylated domains into lipoylated derivatives. This is Lipoyl synthase from Shewanella sediminis (strain HAW-EB3).